Here is a 127-residue protein sequence, read N- to C-terminus: MELWVKIGDEKKKYQGSFQSVMENLVKDGRGKEIQILCMHAPPRERRRFKRELRWYDKDILKTASAIARWFYLREYRRIRRRIKELKNRAKYISKGEIAYNPKIMKEVEALKEKLSEIEKKIEELKV.

The stretch at 71 to 126 (FYLREYRRIRRRIKELKNRAKYISKGEIAYNPKIMKEVEALKEKLSEIEKKIEELK) forms a coiled coil.

This is an uncharacterized protein from Aquifex aeolicus (strain VF5).